A 215-amino-acid polypeptide reads, in one-letter code: Cytochrome b6 (215 aa).

Residues 32 to 52 (IFYCLGGITLTCFLVQVATGF) traverse the membrane as a helical segment. Position 35 (cysteine 35) interacts with heme c. The heme b site is built by histidine 86 and histidine 100. 3 consecutive transmembrane segments (helical) span residues 90 to 110 (ASMM…TGGF), 116 to 136 (LTWV…VTGY), and 186 to 206 (LHTF…FLMI). Heme b-binding residues include histidine 187 and histidine 202.

This sequence belongs to the cytochrome b family. PetB subfamily. As to quaternary structure, the 4 large subunits of the cytochrome b6-f complex are cytochrome b6, subunit IV (17 kDa polypeptide, PetD), cytochrome f and the Rieske protein, while the 4 small subunits are PetG, PetL, PetM and PetN. The complex functions as a dimer. The cofactor is heme b. Requires heme c as cofactor.

Its subcellular location is the plastid. The protein localises to the chloroplast thylakoid membrane. Component of the cytochrome b6-f complex, which mediates electron transfer between photosystem II (PSII) and photosystem I (PSI), cyclic electron flow around PSI, and state transitions. The protein is Cytochrome b6 of Citrus sinensis (Sweet orange).